A 463-amino-acid polypeptide reads, in one-letter code: uncharacterized protein (463 aa).

Transmembrane regions (helical) follow at residues 21 to 40 (DFACNLIYATVSTYLLFFYT), 50 to 72 (AGTMFLVVRIIDALADPFIGTIV), 84 to 104 (PYLLFGAFPFVILAILCFTTP), 112 to 132 (LIYAYITYVGLSLTYTTINVP), 156 to 176 (LFANLGGLVVAFFVPLLAAYL), 186 to 206 (GWQLTMGILGMIGGCLLIFCF), 237 to 257 (LVVLSIFFIIIFGVNSISNSV), 271 to 291 (LVKWYGLIGSLPALVILPFIP), 311 to 331 (IIGLLALLFVPPSNVYLILVC), 334 to 354 (IAAAGSLTAGGYMWALIPETI), 367 to 387 (GLIYAIIGFFFKFGMALGGVV), and 408 to 428 (LMGILITTTIIPVFLLVLALI).

This sequence belongs to the sodium:galactoside symporter (TC 2.A.2) family.

The protein localises to the cell membrane. This is an uncharacterized protein from Bacillus subtilis (strain 168).